Reading from the N-terminus, the 341-residue chain is NADH-quinone oxidoreductase subunit H (341 aa).

9 consecutive transmembrane segments (helical) span residues L4–F24, P38–I58, I70–I90, V115–G135, I161–V181, M187–L207, L239–F259, I275–I295, and V314–G334.

Belongs to the complex I subunit 1 family. As to quaternary structure, NDH-1 is composed of 14 different subunits. Subunits NuoA, H, J, K, L, M, N constitute the membrane sector of the complex.

The protein resides in the cell membrane. It carries out the reaction a quinone + NADH + 5 H(+)(in) = a quinol + NAD(+) + 4 H(+)(out). Functionally, NDH-1 shuttles electrons from NADH, via FMN and iron-sulfur (Fe-S) centers, to quinones in the respiratory chain. The immediate electron acceptor for the enzyme in this species is believed to be ubiquinone. Couples the redox reaction to proton translocation (for every two electrons transferred, four hydrogen ions are translocated across the cytoplasmic membrane), and thus conserves the redox energy in a proton gradient. This subunit may bind ubiquinone. The polypeptide is NADH-quinone oxidoreductase subunit H (Wolbachia pipientis wMel).